The chain runs to 223 residues: Virulence transcriptional regulatory protein PhoP (223 aa).

One can recognise a Response regulatory domain in the interval 2–116 (RVLVVEDNAL…EVMARMQALM (115 aa)). Asp-51 carries the 4-aspartylphosphate modification. The ompR/PhoB-type DNA-binding region spans 124–222 (SQVISLPPFQ…VRGQGYLFEL (99 aa)).

In terms of processing, phosphorylated by PhoQ.

It localises to the cytoplasm. In terms of biological role, member of the two-component regulatory system PhoQ/PhoP involved in virulence and adaptation to low Mg(2+) environments. Necessary for resistance to killing by polymorphonuclear leukocytes (PMNs) and cationic antimicrobial peptides (CAMP) they produce. In Shigella flexneri, this protein is Virulence transcriptional regulatory protein PhoP (phoP).